A 109-amino-acid polypeptide reads, in one-letter code: Transcription initiation factor IIA subunit 2 (109 aa).

It belongs to the TFIIA subunit 2 family. In terms of assembly, TFIIA is a heterodimer of the large unprocessed subunit 1 and a small subunit gamma. It was originally believed to be a heterotrimer of an alpha (p35), a beta (p19) and a gamma subunit (p12). Interacts with NCOA6 general coactivator. TFIIA forms a complex with TBP. Interacts with HSF1 (via transactivation domain). Part of TBP-based Pol II pre-initiation complex (PIC), in which Pol II core assembles with general transcription factors and other specific initiation factors including GTF2E1, GTF2E2, GTF2F1, GTF2F2, TCEA1, ERCC2, ERCC3, GTF2H2, GTF2H3, GTF2H4, GTF2H5, GTF2A1, GTF2A2, GTF2B and TBP; this large multi-subunit PIC complex mediates DNA unwinding and targets Pol II core to the transcription start site where the first phosphodiester bond forms.

Its subcellular location is the nucleus. Its function is as follows. TFIIA is a component of the transcription machinery of RNA polymerase II and plays an important role in transcriptional activation. TFIIA in a complex with TBP mediates transcriptional activity. The protein is Transcription initiation factor IIA subunit 2 (Gtf2a2) of Rattus norvegicus (Rat).